The chain runs to 247 residues: Phosphoribosylaminoimidazole-succinocarboxamide synthase (247 aa).

This sequence belongs to the SAICAR synthetase family.

The enzyme catalyses 5-amino-1-(5-phospho-D-ribosyl)imidazole-4-carboxylate + L-aspartate + ATP = (2S)-2-[5-amino-1-(5-phospho-beta-D-ribosyl)imidazole-4-carboxamido]succinate + ADP + phosphate + 2 H(+). It functions in the pathway purine metabolism; IMP biosynthesis via de novo pathway; 5-amino-1-(5-phospho-D-ribosyl)imidazole-4-carboxamide from 5-amino-1-(5-phospho-D-ribosyl)imidazole-4-carboxylate: step 1/2. In Gloeobacter violaceus (strain ATCC 29082 / PCC 7421), this protein is Phosphoribosylaminoimidazole-succinocarboxamide synthase.